A 143-amino-acid chain; its full sequence is Large ribosomal subunit protein uL15 (143 aa).

Residues 1-51 (MRLNSIAPAPGSRPSAKRVGRGIGSGLGKTAGRGHKGQKARAGGYHKVGFE) form a disordered region. The segment covering 21–31 (RGIGSGLGKTA) has biased composition (gly residues).

It belongs to the universal ribosomal protein uL15 family. In terms of assembly, part of the 50S ribosomal subunit.

Binds to the 23S rRNA. The polypeptide is Large ribosomal subunit protein uL15 (Thioalkalivibrio sulfidiphilus (strain HL-EbGR7)).